Consider the following 320-residue polypeptide: Aspartate carbamoyltransferase catalytic subunit (320 aa).

Residues R58 and T59 each coordinate carbamoyl phosphate. Residue K86 coordinates L-aspartate. Residues R108, H136, and Q139 each coordinate carbamoyl phosphate. Positions 169 and 223 each coordinate L-aspartate. Carbamoyl phosphate contacts are provided by G264 and P265.

It belongs to the aspartate/ornithine carbamoyltransferase superfamily. ATCase family. Heterododecamer (2C3:3R2) of six catalytic PyrB chains organized as two trimers (C3), and six regulatory PyrI chains organized as three dimers (R2).

The enzyme catalyses carbamoyl phosphate + L-aspartate = N-carbamoyl-L-aspartate + phosphate + H(+). It functions in the pathway pyrimidine metabolism; UMP biosynthesis via de novo pathway; (S)-dihydroorotate from bicarbonate: step 2/3. Functionally, catalyzes the condensation of carbamoyl phosphate and aspartate to form carbamoyl aspartate and inorganic phosphate, the committed step in the de novo pyrimidine nucleotide biosynthesis pathway. The protein is Aspartate carbamoyltransferase catalytic subunit of Cereibacter sphaeroides (strain ATCC 17029 / ATH 2.4.9) (Rhodobacter sphaeroides).